Consider the following 785-residue polypeptide: Endonuclease MutS2 (785 aa).

333–340 contributes to the ATP binding site; sequence GPNTGGKT. In terms of domain architecture, Smr spans 710-785; it reads LDLRGQRYDE…GNGATIVQLK (76 aa).

The protein belongs to the DNA mismatch repair MutS family. MutS2 subfamily. As to quaternary structure, homodimer. Binds to stalled ribosomes, contacting rRNA.

Endonuclease that is involved in the suppression of homologous recombination and thus may have a key role in the control of bacterial genetic diversity. Its function is as follows. Acts as a ribosome collision sensor, splitting the ribosome into its 2 subunits. Detects stalled/collided 70S ribosomes which it binds and splits by an ATP-hydrolysis driven conformational change. Acts upstream of the ribosome quality control system (RQC), a ribosome-associated complex that mediates the extraction of incompletely synthesized nascent chains from stalled ribosomes and their subsequent degradation. Probably generates substrates for RQC. In Lactobacillus acidophilus (strain ATCC 700396 / NCK56 / N2 / NCFM), this protein is Endonuclease MutS2.